Here is a 290-residue protein sequence, read N- to C-terminus: Bifunctional protein FolD 3 (290 aa).

Residues Gly163–Ser165 and Ile229 contribute to the NADP(+) site.

It belongs to the tetrahydrofolate dehydrogenase/cyclohydrolase family. In terms of assembly, homodimer.

The enzyme catalyses (6R)-5,10-methylene-5,6,7,8-tetrahydrofolate + NADP(+) = (6R)-5,10-methenyltetrahydrofolate + NADPH. It carries out the reaction (6R)-5,10-methenyltetrahydrofolate + H2O = (6R)-10-formyltetrahydrofolate + H(+). It functions in the pathway one-carbon metabolism; tetrahydrofolate interconversion. In terms of biological role, catalyzes the oxidation of 5,10-methylenetetrahydrofolate to 5,10-methenyltetrahydrofolate and then the hydrolysis of 5,10-methenyltetrahydrofolate to 10-formyltetrahydrofolate. This chain is Bifunctional protein FolD 3, found in Roseobacter denitrificans (strain ATCC 33942 / OCh 114) (Erythrobacter sp. (strain OCh 114)).